We begin with the raw amino-acid sequence, 191 residues long: Ubiquinol-cytochrome c reductase iron-sulfur subunit (191 aa).

A helical membrane pass occupies residues 18–35 (ATAATGVVVTGAAVWPLI). The Rieske domain occupies 94–189 (RDTSAENANK…AAFVDETTIK (96 aa)). Positions 95–116 (DTSAENANKPGAEATDENRTLP) are disordered. Residues Cys133, His135, Cys153, and His156 each contribute to the [2Fe-2S] cluster site. Cys138 and Cys155 are disulfide-bonded.

It belongs to the Rieske iron-sulfur protein family. The main subunits of complex b-c1 are: cytochrome b, cytochrome c1 and the Rieske protein. [2Fe-2S] cluster is required as a cofactor.

It localises to the cell membrane. The enzyme catalyses a quinol + 2 Fe(III)-[cytochrome c](out) = a quinone + 2 Fe(II)-[cytochrome c](out) + 2 H(+)(out). Component of the ubiquinol-cytochrome c reductase complex (complex III or cytochrome b-c1 complex), which is a respiratory chain that generates an electrochemical potential coupled to ATP synthesis. The protein is Ubiquinol-cytochrome c reductase iron-sulfur subunit (petA) of Rhodobacter capsulatus (strain ATCC BAA-309 / NBRC 16581 / SB1003).